The chain runs to 379 residues: Stimulator of interferon genes protein (379 aa).

The next 2 membrane-spanning stretches (helical) occupy residues 18–38 and 43–63; these read AKKAAFVLLSVCLVVLWDLGE and ILQWLMLHLASLQLGLLFKGV. 2 S-palmitoyl cysteine lipidation sites follow: C88 and C91. 2 helical membrane-spanning segments follow: residues 89–109 and 114–134; these read LGCPIRCGTLLLLSCYFYTPF and HLPFTWTLALLGLSQALSILL. A cyclic dinucleotide-binding domain (CBD) region spans residues 153–340; the sequence is LNVAQGMAWS…RHLKQEEKEE (188 aa). The 2',3'-cGAMP site is built by S162, Y167, R238, and T263. Residues S162, Y167, 238–241, and T263 each bind 3',3'-c-di-GMP; that span reads RVYT. The 2',3'-cUAMP site is built by Y167, R238, and T263. A disordered region spans residues 338–363; sequence KEEVTVDSARTSVMPDPSMLPQGPEL. The tract at residues 340–379 is C-terminal tail (CTT); the sequence is EVTVDSARTSVMPDPSMLPQGPELLISSMDQPLPLRTDVF. A Phosphoserine modification is found at S355. Residues 363–366 carry the pLxIS motif motif; it reads LLIS. A Phosphoserine; by TBK1 modification is found at S366.

It belongs to the STING family. In terms of assembly, homodimer; forms a homodimer in absence of cyclic nucleotide (c-di-GMP or cGAMP). Homotetramer; in presence of cyclic nucleotide (c-di-GMP or cGAMP), forms tetramers and higher-order oligomers through side-by-side packing. Interacts (when phosphorylated) with IRF3; following activation and phosphorylation on the pLxIS motif by TBK1, recruits IRF3. Interacts with TBK1; when homodimer, leading to subsequent production of IFN-beta. Interacts (via transmembrane domain) with TMEM203. Post-translationally, phosphorylation by TBK1 leads to activation and production of IFN-beta. Following cyclic nucleotide (c-di-GMP or cGAMP)-binding, activation and translocation from the endoplasmic reticulum, STING1 is phosphorylated by TBK1 at Ser-366 in the pLxIS motif. The phosphorylated pLxIS motif constitutes an IRF3-binding motif, leading to recruitment of the transcription factor IRF3 to induce type-I interferons and other cytokines. In contrast, lacks phosphorylation site at position 358, leading to reduced production of type-I interferons and other cytokines.

The protein resides in the endoplasmic reticulum membrane. It localises to the cytoplasm. The protein localises to the perinuclear region. It is found in the endoplasmic reticulum-Golgi intermediate compartment membrane. Its subcellular location is the golgi apparatus membrane. The protein resides in the cytoplasmic vesicle. It localises to the autophagosome membrane. The protein localises to the mitochondrion outer membrane. It is found in the cell membrane. The catalysed reaction is H(+)(in) = H(+)(out). In terms of biological role, facilitator of innate immune signaling that acts as a sensor of cytosolic DNA from bacteria and viruses and promotes low production of type I interferon (IFN-alpha and IFN-beta). Compared to other mammals, STING1-dependent type I interferon induction is strongly reduced in bats, suggesting that the cGAS-STING pathway promotes a limited inflammatory response. Innate immune response is triggered in response to non-CpG double-stranded DNA from viruses and bacteria delivered to the cytoplasm. Acts by binding cyclic dinucleotides: recognizes and binds cyclic di-GMP (c-di-GMP), a second messenger produced by bacteria, cyclic UMP-AMP (2',3'-cUAMP), and cyclic GMP-AMP (cGAMP), a messenger produced by CGAS in response to DNA virus in the cytosol. Upon binding to c-di-GMP, cUAMP or cGAMP, STING1 oligomerizes, translocates from the endoplasmic reticulum and is phosphorylated by TBK1 on the pLxIS motif, leading to recruitment and subsequent activation of the transcription factor IRF3 to induce expression of type I interferon and exert a potent anti-viral state. In addition to promote the production of type I interferons, plays a direct role in autophagy. Following cGAMP-binding, STING1 buds from the endoplasmic reticulum into COPII vesicles, which then form the endoplasmic reticulum-Golgi intermediate compartment (ERGIC). The ERGIC serves as the membrane source for WIPI2 recruitment and LC3 lipidation, leading to formation of autophagosomes that target cytosolic DNA or DNA viruses for degradation by the lysosome. Promotes autophagy by acting as a proton channel that directs proton efflux from the Golgi to facilitate MAP1LC3B/LC3B lipidation. The autophagy- and interferon-inducing activities can be uncoupled and autophagy induction is independent of TBK1 phosphorylation. The protein is Stimulator of interferon genes protein of Pteronotus parnellii (Parnell's mustached bat).